The sequence spans 199 residues: Thymidine kinase (199 aa).

ATP contacts are provided by residues 15–22 (GSMFSGKS) and 88–91 (DEVQ). Glutamate 89 functions as the Proton acceptor in the catalytic mechanism. Residues cysteine 145, cysteine 148, cysteine 183, and histidine 186 each contribute to the Zn(2+) site.

It belongs to the thymidine kinase family. As to quaternary structure, homotetramer.

The protein resides in the cytoplasm. The enzyme catalyses thymidine + ATP = dTMP + ADP + H(+). The protein is Thymidine kinase of Staphylococcus saprophyticus subsp. saprophyticus (strain ATCC 15305 / DSM 20229 / NCIMB 8711 / NCTC 7292 / S-41).